The chain runs to 564 residues: MGVVNLLSRSSFPSVDSYLALSVLVAIVASVTVFTTFRSQPELQKLIEEELRNNTRLSSAYGLNIEALSGHTFFQIAHYILSDTTLIWVAINSYFAILAVCTRLIIKLTFKELARQEENVARQAFFCYVLLTIVYLSVVIGPQKGHRVMPWMIWGGICAFLSHLQFITCQRLKHISPSCDRGSQKISFLSLFLFFVSIAMTFLISRFQHHLTWQPAVLLYFDCLLAVFRSTYILFRCISSSRVFSFNPDSVRHFNYWLELITNFVCELIQMLSFAQLLAFSPGLNLTSIFFLYHMKLTYNCMTEQLSRHRNHKKIFEHIERSYPSVKCANGDDRCVVCWELLGTSRRLPCSHQFHDWCLMWWLAQDSSCPTCRCTIPSPQDQIRQPPEVGNSTRLRFNGGSFGFVHFPAFTLEVAANFGPFFGRAAEPTEEQLQTMLEQVREMFPQMSVDIIMTDLRQSGSAQSTIENILEGRIGMNASFMPGGVLDDELSDESENEIEYEEPAEIVQEPDNGRQRTWTKLSSSSGDEDLSYYEIQRAKMIETYRRKYLESDKAADLRAMGITE.

A helical membrane pass occupies residues Ser-17 to Phe-37. An N-linked (GlcNAc...) asparagine glycan is attached at Asn-53. Helical transmembrane passes span Tyr-61–Leu-81, Leu-86–Ile-106, Gln-123–Gln-143, Val-148–Thr-168, Lys-185–Ser-205, Pro-215–Phe-235, and Leu-272–Leu-292. The RING-type; atypical zinc-finger motif lies at Cys-335–Arg-373. The CUE domain occupies Gln-432–Ile-474.

The protein localises to the membrane. In terms of biological role, proposed to have a role in neuroprotection. This Caenorhabditis elegans protein is E3 ubiquitin-protein ligase hrd-like protein 1 (hrdl-1).